Here is a 344-residue protein sequence, read N- to C-terminus: Arginine N-succinyltransferase (344 aa).

Leucine 125 lines the succinyl-CoA pocket. Histidine 229 serves as the catalytic Proton donor.

This sequence belongs to the arginine N-succinyltransferase family.

The enzyme catalyses succinyl-CoA + L-arginine = N(2)-succinyl-L-arginine + CoA + H(+). It participates in amino-acid degradation; L-arginine degradation via AST pathway; L-glutamate and succinate from L-arginine: step 1/5. In terms of biological role, catalyzes the transfer of succinyl-CoA to arginine to produce N(2)-succinylarginine. The polypeptide is Arginine N-succinyltransferase (Escherichia coli O127:H6 (strain E2348/69 / EPEC)).